A 1575-amino-acid chain; its full sequence is Mediator of RNA polymerase II transcription subunit 1 (1575 aa).

An interaction with the Mediator complex and THRA region spans residues 1–670; sequence MKAQGETEDS…YGSSPLERQN (670 aa). Positions 16-590 are interaction with ESR1; that stretch reads MSSLLERLHA…SIKDRHESVG (575 aa). 2 interaction with the Mediator complex regions span residues 108 to 212 and 215 to 390; these read FYVE…GYLT and SGGH…SLQG. Positions 405-644 are interaction with THRA; it reads PLILNMIRHQ…MAGNTKNHPM (240 aa). The tract at residues 542–789 is interaction with VDR; the sequence is PASSPGYGMT…TDILSDIAEE (248 aa). The residue at position 588 (serine 588) is a Phosphoserine. An LXXLL motif 1 motif is present at residues 604–608; the sequence is LTSLL. Disordered stretches follow at residues 609-706, 737-760, 791-818, 874-895, and 951-1564; these read QITG…QTED, HITPAPSQCSTPPATYPQPVSHPQ, SKLPSTSDDCPPIGTPVRDSSSSGHSQS, SQSGFGEEYFDESSQSGDNDDF, and SGSQ…GEED. The span at 622 to 632 shows a compositional bias: pro residues; it reads PTPPHHTPPPV. The tract at residues 622 to 701 is interaction with GATA1; the sequence is PTPPHHTPPP…SSRVPPDKPK (80 aa). The interval 622–701 is interaction with PPARGC1A and THRA; the sequence is PTPPHHTPPP…SSRVPPDKPK (80 aa). The short motif at 645–649 is the LXXLL motif 2 element; that stretch reads LMNLL. Residues 655–675 show a composition bias toward polar residues; that stretch reads QDFSTLYGSSPLERQNSSSGS. The segment at 656 to 1066 is interaction with ESR1; it reads DFSTLYGSSP…TPPIPKITIQ (411 aa). Residue serine 664 is modified to Phosphoserine. Over residues 696–706 the composition is skewed to basic and acidic residues; sequence PPDKPKHQTED. A Phosphoserine modification is found at serine 795. Threonine 805 is modified (phosphothreonine). A compositionally biased stretch (polar residues) spans 808–818; that stretch reads RDSSSSGHSQS. The Integrase domain-binding motif (IBM) motif lies at 875–902; the sequence is QSGFGEEYFDESSQSGDNDDFKGFASQA. Phosphoserine occurs at positions 887, 953, and 955. Residues 963-974 show a composition bias toward basic and acidic residues; sequence LGKEKTQKRVKE. Residues 976 to 986 show a composition bias toward gly residues; that stretch reads NGTGASSGSGP. Residue threonine 1032 is modified to Phosphothreonine; by MAPK1 or MAPK3. A compositionally biased stretch (low complexity) spans 1034 to 1051; the sequence is PTSTGGSKSPGSSGRSQT. A phosphothreonine mark is found at threonine 1051 and threonine 1057. 2 stretches are compositionally biased toward low complexity: residues 1078–1094 and 1101–1152; these read SSHSQYTSSGSVSSSGS and SSSS…SQTG. A Phosphoserine modification is found at serine 1158. The span at 1158 to 1184 shows a compositional bias: polar residues; sequence SPITKHGLSSGSSSTKMKPQGKPSSLM. The residue at position 1179 (lysine 1179) is an N6-acetyllysine. The segment covering 1185–1197 has biased composition (low complexity); that stretch reads NPSISKPNISPSH. Serine 1209 is modified (phosphoserine). Threonine 1217 bears the Phosphothreonine mark. Composition is skewed to low complexity over residues 1220-1258 and 1265-1295; these read SSKAKSPISSGSSGSHVSGTSSSSGMKSSSGSASSGSVS and SNSCTPSSSSFSSSGSSMSSSQNQHGSSKGK. Serine 1225 bears the Phosphoserine mark. Residues 1251–1423 are interaction with TP53; that stretch reads SASSGSVSQK…KPGESGGDGL (173 aa). Phosphoserine is present on residues serine 1304 and serine 1349. Polar residues predominate over residues 1331–1352; the sequence is MGASTNSSNHPMSSKHNTSGGE. The segment covering 1354-1366 has biased composition (basic and acidic residues); that stretch reads QSKREKSDKDKSK. Serine 1405 and serine 1435 each carry phosphoserine. Composition is skewed to polar residues over residues 1427-1442 and 1450-1484; these read IASSKNYGSPLISGST and PSHSKSPAYTPQNVDSESESGSSIAERSYQNSPSS. The residue at position 1442 (threonine 1442) is a Phosphothreonine. The residue at position 1459 (threonine 1459) is a Phosphothreonine; by MAPK1 or MAPK3. Residues serine 1465, serine 1467, serine 1481, serine 1483, and serine 1484 each carry the phosphoserine modification. The segment covering 1498 to 1507 has biased composition (basic residues); it reads KHKKHKKEKK. The residue at position 1523 (lysine 1523) is an N6-acetyllysine. Positions 1527 to 1545 are enriched in polar residues; the sequence is WSKSPISSDPTASVTNNPI.

This sequence belongs to the Mediator complex subunit 1 family. Component of the Mediator complex, which is composed of MED1, MED4, MED6, MED7, MED8, MED9, MED10, MED11, MED12, MED13, MED13L, MED14, MED15, MED16, MED17, MED18, MED19, MED20, MED21, MED22, MED23, MED24, MED25, MED26, MED27, MED29, MED30, MED31, CCNC, CDK8 and CDC2L6/CDK11. The MED12, MED13, CCNC and CDK8 subunits form a distinct module termed the CDK8 module. Mediator containing the CDK8 module is less active than Mediator lacking this module in supporting transcriptional activation. Individual preparations of the Mediator complex lacking one or more distinct subunits have been variously termed ARC, CRSP, DRIP, PC2, SMCC and TRAP. This subunit specifically interacts with a number of nuclear receptors in a ligand-dependent fashion including AR, ESR1, ESR2, PPARA, PPARG, RORA, RXRA, RXRG, THRA, THRB and VDR. Interacts with CTNNB1, GABPA, GLI3, PPARGC1A and TP53. Interacts with GATA1 and YWHAH. Interacts with CLOCK; this interaction requires the presence of THRAP3. Interacts with CCAR1. Interacts with NR4A3. Interacts (via IBM motif) with PSIP1 (via IBD domain); phosphorylation increases its affinity for PSIP1. Interacts with USP22. Phosphorylated by MAPK1 or MAPK3 during G2/M phase which may enhance protein stability and promote entry into the nucleolus. Phosphorylation increases its interaction with PSIP1. In terms of tissue distribution, widely expressed in the adult, with high levels of expression in the liver, lung, intestinal mucosa, kidney cortex, thymic cortex, splenic follicle and seminiferous epithelium in testis. Also expressed in the adult heart, brain, spleen and skeletal muscle.

It is found in the nucleus. In terms of biological role, component of the Mediator complex, a coactivator involved in the regulated transcription of nearly all RNA polymerase II-dependent genes. Mediator functions as a bridge to convey information from gene-specific regulatory proteins to the basal RNA polymerase II transcription machinery. Mediator is recruited to promoters by direct interactions with regulatory proteins and serves as a scaffold for the assembly of a functional preinitiation complex with RNA polymerase II and the general transcription factors. Essential for embryogenesis, including development of the central nervous system, heart, liver and placenta and for erythropoiesis. Also required for normal transcriptional control of thyroid-stimulating hormone beta (TSHB) in the pituitary. Acts as a coactivator for GATA1-mediated transcriptional activation during erythroid differentiation of K562 erythroleukemia cells. The sequence is that of Mediator of RNA polymerase II transcription subunit 1 (Med1) from Mus musculus (Mouse).